Reading from the N-terminus, the 221-residue chain is Transmembrane emp24 domain-containing protein 3 (221 aa).

The first 25 residues, 1-25 (MVHEAPHASSFQMLLQLLLLLLLRA), serve as a signal peptide directing secretion. The Lumenal segment spans residues 28–184 (LRSAELTFEL…RAEDLNSRVS (157 aa)). Positions 42–124 (KQCFHEEVEQ…HKTVYFDFQV (83 aa)) constitute a GOLD domain. A Dimethylated arginine modification is found at arginine 103. A helical membrane pass occupies residues 185–205 (YWSVGETIALFVVSFSQVLLL). At 206–221 (KSFFTEKRPVNRAVHS) the chain is on the cytoplasmic side. The COPII vesicle coat-binding signature appears at 208 to 209 (FF). A COPI vesicle coat-binding motif is present at residues 208 to 221 (FFTEKRPVNRAVHS).

Belongs to the EMP24/GP25L family. Monomer in endoplasmic reticulum, endoplasmic reticulum-Golgi intermediate compartment and cis-Golgi network. Interacts (via C-terminus) with COPG1; the interaction involves dimeric TMED3; however, there are conflicting reports on the interaction. Interacts with GORASP1 and GORASP2.

The protein resides in the endoplasmic reticulum-Golgi intermediate compartment membrane. The protein localises to the golgi apparatus. It localises to the cis-Golgi network membrane. Its subcellular location is the golgi stack membrane. It is found in the endoplasmic reticulum membrane. The protein resides in the cytoplasmic vesicle. The protein localises to the COPI-coated vesicle membrane. Potential role in vesicular protein trafficking, mainly in the early secretory pathway. Contributes to the coupled localization of TMED2 and TMED10 in the cis-Golgi network. The sequence is that of Transmembrane emp24 domain-containing protein 3 (Tmed3) from Mus musculus (Mouse).